Reading from the N-terminus, the 156-residue chain is ATP synthase subunit b (156 aa).

Residues 7 to 27 form a helical membrane-spanning segment; it reads FFAQMVVFFILWWVVAKFIWP.

The protein belongs to the ATPase B chain family. F-type ATPases have 2 components, F(1) - the catalytic core - and F(0) - the membrane proton channel. F(1) has five subunits: alpha(3), beta(3), gamma(1), delta(1), epsilon(1). F(0) has three main subunits: a(1), b(2) and c(10-14). The alpha and beta chains form an alternating ring which encloses part of the gamma chain. F(1) is attached to F(0) by a central stalk formed by the gamma and epsilon chains, while a peripheral stalk is formed by the delta and b chains.

Its subcellular location is the cell inner membrane. In terms of biological role, f(1)F(0) ATP synthase produces ATP from ADP in the presence of a proton or sodium gradient. F-type ATPases consist of two structural domains, F(1) containing the extramembraneous catalytic core and F(0) containing the membrane proton channel, linked together by a central stalk and a peripheral stalk. During catalysis, ATP synthesis in the catalytic domain of F(1) is coupled via a rotary mechanism of the central stalk subunits to proton translocation. Its function is as follows. Component of the F(0) channel, it forms part of the peripheral stalk, linking F(1) to F(0). This chain is ATP synthase subunit b, found in Cupriavidus necator (strain ATCC 17699 / DSM 428 / KCTC 22496 / NCIMB 10442 / H16 / Stanier 337) (Ralstonia eutropha).